We begin with the raw amino-acid sequence, 484 residues long: Putative cysteine ligase BshC (484 aa).

Residues 372 to 435 (RAFRDRVEGL…AARDEVLARH (64 aa)) are a coiled coil.

This sequence belongs to the BshC family.

This is Putative cysteine ligase BshC from Thermus thermophilus (strain ATCC 27634 / DSM 579 / HB8).